The primary structure comprises 159 residues: ATP synthase subunit b (159 aa).

The helical transmembrane segment at 2-22 (NISIPQIIAAILNFIILLLIV) threads the bilayer.

This sequence belongs to the ATPase B chain family. F-type ATPases have 2 components, F(1) - the catalytic core - and F(0) - the membrane proton channel. F(1) has five subunits: alpha(3), beta(3), gamma(1), delta(1), epsilon(1). F(0) has three main subunits: a(1), b(2) and c(10-14). The alpha and beta chains form an alternating ring which encloses part of the gamma chain. F(1) is attached to F(0) by a central stalk formed by the gamma and epsilon chains, while a peripheral stalk is formed by the delta and b chains.

It localises to the cell membrane. F(1)F(0) ATP synthase produces ATP from ADP in the presence of a proton or sodium gradient. F-type ATPases consist of two structural domains, F(1) containing the extramembraneous catalytic core and F(0) containing the membrane proton channel, linked together by a central stalk and a peripheral stalk. During catalysis, ATP synthesis in the catalytic domain of F(1) is coupled via a rotary mechanism of the central stalk subunits to proton translocation. Its function is as follows. Component of the F(0) channel, it forms part of the peripheral stalk, linking F(1) to F(0). This Clostridium botulinum (strain ATCC 19397 / Type A) protein is ATP synthase subunit b.